Here is an 804-residue protein sequence, read N- to C-terminus: Probable replication endonuclease from prophage-like region (804 aa).

Catalysis depends on O-(5'-phospho-DNA)-tyrosine intermediate residues tyrosine 498 and tyrosine 502.

Belongs to the phage GPA family.

In terms of biological role, possible endonuclease which induces a single-strand cut and initiates DNA replication. This is Probable replication endonuclease from prophage-like region from Shigella boydii serotype 4 (strain Sb227).